A 133-amino-acid polypeptide reads, in one-letter code: UPF0047 protein Rv2556c (133 aa).

This sequence belongs to the UPF0047 family.

This Mycobacterium tuberculosis (strain ATCC 25618 / H37Rv) protein is UPF0047 protein Rv2556c.